The chain runs to 603 residues: Polypeptide N-acetylgalactosaminyltransferase 9 (603 aa).

The Cytoplasmic segment spans residues 1–6 (MAVARK). A helical; Signal-anchor for type II membrane protein transmembrane segment spans residues 7-29 (IRTLLTVNILVFVGIVLFSVYCR). Residues 30–603 (LQGRSQELVR…IRNWIKHARH (574 aa)) lie on the Lumenal side of the membrane. 2 cysteine pairs are disulfide-bonded: cysteine 141/cysteine 372 and cysteine 363/cysteine 442. The tract at residues 150–261 (LPQVSVVFIF…TGWAEPALSR (112 aa)) is catalytic subdomain A. Aspartate 191 and arginine 222 together coordinate substrate. Mn(2+)-binding residues include aspartate 245, histidine 247, and histidine 377. The interval 318–380 (PIRTPAMIGC…PCSRVAHIER (63 aa)) is catalytic subdomain B. Substrate-binding residues include arginine 380 and tyrosine 385. N-linked (GlcNAc...) asparagine glycosylation is present at asparagine 460. In terms of domain architecture, Ricin B-type lectin spans 464-600 (TYGEVRNSKA…KWMIRNWIKH (137 aa)). 3 disulfides stabilise this stretch: cysteine 477–cysteine 493, cysteine 525–cysteine 540, and cysteine 567–cysteine 587.

Belongs to the glycosyltransferase 2 family. GalNAc-T subfamily. It depends on Mn(2+) as a cofactor. As to expression, specifically expressed in brain. Not expressed in heart, placenta, lung, liver, skeletal muscle, kidney, pancreas, spleen, thymus, prostate, testis, ovary, small intestine, colon and leukocyte. In brain, it is expressed in cerebellum, frontal lobe, temporal lobe, putamen and spinal cord, weakly expressed in cerebral cortex. Not expressed in medulla and occipital pole.

It is found in the golgi apparatus membrane. It carries out the reaction L-seryl-[protein] + UDP-N-acetyl-alpha-D-galactosamine = a 3-O-[N-acetyl-alpha-D-galactosaminyl]-L-seryl-[protein] + UDP + H(+). It catalyses the reaction L-threonyl-[protein] + UDP-N-acetyl-alpha-D-galactosamine = a 3-O-[N-acetyl-alpha-D-galactosaminyl]-L-threonyl-[protein] + UDP + H(+). It participates in protein modification; protein glycosylation. Catalyzes the initial reaction in O-linked oligosaccharide biosynthesis, the transfer of an N-acetyl-D-galactosamine residue to a serine or threonine residue on the protein receptor. Does not glycosylate apomucin or SDC3. This chain is Polypeptide N-acetylgalactosaminyltransferase 9 (GALNT9), found in Homo sapiens (Human).